Consider the following 142-residue polypeptide: MKTFSAKAHEVTREWYVIDATDKVLGRVASEVARRLRGKHKPEFTPHVDTGDFIIVINASKLKVTGNKTLDKKYYRHSGYPGGIYETTFGKMQERFPGRALEKAVKGMLPKCPLGYAMIKKLKVYAEATHPHSAQQPKALEI.

Belongs to the universal ribosomal protein uL13 family. In terms of assembly, part of the 50S ribosomal subunit.

This protein is one of the early assembly proteins of the 50S ribosomal subunit, although it is not seen to bind rRNA by itself. It is important during the early stages of 50S assembly. The polypeptide is Large ribosomal subunit protein uL13 (Burkholderia mallei (strain NCTC 10247)).